Reading from the N-terminus, the 464-residue chain is MLATRRLLGWSLPARVSVRFSGDTTAPKKTSFGSLKDEDRIFTNLYGRHDWRLKGSLSRGDWYKTKEILLKGPDWILGEIKTSGLRGRGGAGFPTGLKWSFMNKPSDGRPKYLVVNADEGEPGTCKDREILRHDPHKLVEGCLVGGRAMGARAAYIYIRGEFYNEASNLQVAIREAYEAGLIGKNACGSGYDFDVFVVRGAGAYICGEETALIESIEGKQGKPRLKPPFPADVGVFGCPTTVANVETVAVSPTICRRGGTWFAGFGRERNSGTKLFNISGHVNHPCTVEEEMSVPLKELIEKHAGGVTGGWDNLLAVIPGGSSTPLIPKSVCETVLMDFDALVQAQTGLGTAAVIVMDRSTDIVKAIARLIEFYKHESCGQCTPCREGVDWMNKVMARFVRGDARPAEIDSLWEISKQIEGHTICALGDGAAWPVQGLIRHFRPELEERMQRFAQQHQARQAAS.

The transit peptide at 1 to 20 (MLATRRLLGWSLPARVSVRF) directs the protein to the mitochondrion. K81 carries the N6-acetyllysine; alternate modification. At K81 the chain carries N6-succinyllysine; alternate. An NADH-binding site is contributed by 87–96 (GRGGAGFPTG). An N6-acetyllysine modification is found at K104. 199–247 (RGAGAYICGEETALIESIEGKQGKPRLKPPFPADVGVFGCPTTVANVET) contributes to the FMN binding site. An Omega-N-methylarginine modification is found at R257. The residue at position 375 (K375) is an N6-acetyllysine. C379, C382, C385, and C425 together coordinate [4Fe-4S] cluster.

It belongs to the complex I 51 kDa subunit family. In terms of assembly, core subunit of respiratory chain NADH dehydrogenase (Complex I) which is composed of 45 different subunits. This is a component of the flavoprotein-sulfur (FP) fragment of the enzyme. Interacts with RAB5IF. Requires FMN as cofactor. It depends on [4Fe-4S] cluster as a cofactor.

It is found in the mitochondrion inner membrane. It catalyses the reaction a ubiquinone + NADH + 5 H(+)(in) = a ubiquinol + NAD(+) + 4 H(+)(out). Functionally, core subunit of the mitochondrial membrane respiratory chain NADH dehydrogenase (Complex I) which catalyzes electron transfer from NADH through the respiratory chain, using ubiquinone as an electron acceptor. Part of the peripheral arm of the enzyme, where the electrons from NADH are accepted by flavin mononucleotide (FMN) and then passed along a chain of iron-sulfur clusters by electron tunnelling to the final acceptor ubiquinone. Contains FMN, which is the initial electron acceptor as well as one iron-sulfur cluster. The chain is NADH dehydrogenase [ubiquinone] flavoprotein 1, mitochondrial from Pan troglodytes (Chimpanzee).